Here is a 107-residue protein sequence, read N- to C-terminus: Integration host factor subunit beta (107 aa).

A disordered region spans residues 76-107; it reads FVPHFKPGKELRERVDGRAGEPLKADDPDDER. Residues 82 to 101 are compositionally biased toward basic and acidic residues; sequence PGKELRERVDGRAGEPLKAD.

Belongs to the bacterial histone-like protein family. In terms of assembly, heterodimer of an alpha and a beta chain.

This protein is one of the two subunits of integration host factor, a specific DNA-binding protein that functions in genetic recombination as well as in transcriptional and translational control. This chain is Integration host factor subunit beta, found in Burkholderia cenocepacia (strain ATCC BAA-245 / DSM 16553 / LMG 16656 / NCTC 13227 / J2315 / CF5610) (Burkholderia cepacia (strain J2315)).